A 105-amino-acid polypeptide reads, in one-letter code: Heat shock protein HspQ (105 aa).

The tract at residues 74-105 (SSELQDERPEQPSMDELAQTIRKQRQAPRLRN) is disordered. Over residues 95–105 (RKQRQAPRLRN) the composition is skewed to basic residues.

Belongs to the HspQ family.

Its subcellular location is the cytoplasm. Involved in the degradation of certain denaturated proteins, including DnaA, during heat shock stress. The polypeptide is Heat shock protein HspQ (Shigella dysenteriae serotype 1 (strain Sd197)).